Reading from the N-terminus, the 590-residue chain is Cytidine monophosphate-N-acetylneuraminic acid hydroxylase (590 aa).

Residues 14–112 (LSPVEVASLK…VEMDENNRLL (99 aa)) form the Rieske domain. Residues C54, H56, C75, and H78 each coordinate [2Fe-2S] cluster.

It belongs to the CMP-Neu5Ac hydroxylase family. The cofactor is [2Fe-2S] cluster.

The protein localises to the cytoplasm. It catalyses the reaction CMP-N-acetyl-beta-neuraminate + 2 Fe(II)-[cytochrome b5] + O2 + 2 H(+) = CMP-N-glycoloyl-beta-neuraminate + 2 Fe(III)-[cytochrome b5] + H2O. It participates in amino-sugar metabolism; N-acetylneuraminate metabolism. Its function is as follows. Sialic acids are components of carbohydrate chains of glycoconjugates and are involved in cell-cell recognition and cell-pathogen interactions. Catalyzes the conversion of CMP-N-acetylneuraminic acid (CMP-Neu5Ac) into its hydroxylated derivative CMP-N-glycolylneuraminic acid (CMP-Neu5Gc), a sialic acid abundantly expressed at the surface of many cells. The chain is Cytidine monophosphate-N-acetylneuraminic acid hydroxylase from Pan troglodytes (Chimpanzee).